Reading from the N-terminus, the 317-residue chain is Apolipoprotein E (317 aa).

The signal sequence occupies residues 1–18; that stretch reads MKVLWAALLVTFLAGCQA. 8 consecutive repeat copies span residues 80–101, 102–123, 124–145, 146–167, 168–189, 190–211, 212–233, and 234–255. The segment at 80–255 is 8 X 22 AA approximate tandem repeats; sequence ALMDETMKEL…RLDEVKEQVA (176 aa). A Methionine sulfoxide modification is found at M143. S147 bears the Phosphoserine mark. The tract at residues 158–168 is LDL and other lipoprotein receptors binding; it reads HLRKLRKRLLR. Position 162 to 165 (162 to 165) interacts with heparin; sequence LRKR. Residues 210-290 form a lipid-binding and lipoprotein association region; sequence AATVGSLAGQ…SWFEPLVEDM (81 aa). 229–236 provides a ligand contact to heparin; that stretch reads GERLRARM. Residues 266-317 form a homooligomerization region; sequence QQIRLQAEAFQARLKSWFEPLVEDMQRQWAGLVEKVQAAMGTSAAPVPSDNH. Positions 278-290 are specificity for association with VLDL; sequence RLKSWFEPLVEDM.

Belongs to the apolipoprotein A1/A4/E family. Homotetramer. May interact with ABCA1; functionally associated with ABCA1 in the biogenesis of HDLs. May interact with APP/A4 amyloid-beta peptide; the interaction is extremely stable in vitro but its physiological significance is unclear. May interact with MAPT. May interact with MAP2. In the cerebrospinal fluid, interacts with secreted SORL1. Interacts with PMEL; this allows the loading of PMEL luminal fragment on ILVs to induce fibril nucleation. In terms of processing, APOE exists as multiple glycosylated and sialylated glycoforms within cells and in plasma. The extent of glycosylation and sialylation are tissue and context specific. Post-translationally, glycated in plasma VLDL. Phosphorylated by FAM20C in the extracellular medium.

The protein resides in the secreted. It localises to the extracellular space. The protein localises to the extracellular matrix. It is found in the extracellular vesicle. Its subcellular location is the endosome. The protein resides in the multivesicular body. Its function is as follows. APOE is an apolipoprotein, a protein associating with lipid particles, that mainly functions in lipoprotein-mediated lipid transport between organs via the plasma and interstitial fluids. APOE is a core component of plasma lipoproteins and is involved in their production, conversion and clearance. Apolipoproteins are amphipathic molecules that interact both with lipids of the lipoprotein particle core and the aqueous environment of the plasma. As such, APOE associates with chylomicrons, chylomicron remnants, very low density lipoproteins (VLDL) and intermediate density lipoproteins (IDL) but shows a preferential binding to high-density lipoproteins (HDL). It also binds a wide range of cellular receptors including the LDL receptor/LDLR, the LDL receptor-related proteins LRP1, LRP2 and LRP8 and the very low-density lipoprotein receptor/VLDLR that mediate the cellular uptake of the APOE-containing lipoprotein particles. Finally, APOE also has a heparin-binding activity and binds heparan-sulfate proteoglycans on the surface of cells, a property that supports the capture and the receptor-mediated uptake of APOE-containing lipoproteins by cells. A main function of APOE is to mediate lipoprotein clearance through the uptake of chylomicrons, VLDLs, and HDLs by hepatocytes. APOE is also involved in the biosynthesis by the liver of VLDLs as well as their uptake by peripheral tissues ensuring the delivery of triglycerides and energy storage in muscle, heart and adipose tissues. By participating in the lipoprotein-mediated distribution of lipids among tissues, APOE plays a critical role in plasma and tissues lipid homeostasis. APOE is also involved in two steps of reverse cholesterol transport, the HDLs-mediated transport of cholesterol from peripheral tissues to the liver, and thereby plays an important role in cholesterol homeostasis. First, it is functionally associated with ABCA1 in the biogenesis of HDLs in tissues. Second, it is enriched in circulating HDLs and mediates their uptake by hepatocytes. APOE also plays an important role in lipid transport in the central nervous system, regulating neuron survival and sprouting. This chain is Apolipoprotein E (APOE), found in Gorilla gorilla gorilla (Western lowland gorilla).